A 155-amino-acid polypeptide reads, in one-letter code: Aspartate carbamoyltransferase regulatory chain (155 aa).

The Zn(2+) site is built by cysteine 113, cysteine 118, cysteine 139, and cysteine 142.

It belongs to the PyrI family. As to quaternary structure, contains catalytic and regulatory chains. It depends on Zn(2+) as a cofactor.

Its function is as follows. Involved in allosteric regulation of aspartate carbamoyltransferase. This is Aspartate carbamoyltransferase regulatory chain from Methanospirillum hungatei JF-1 (strain ATCC 27890 / DSM 864 / NBRC 100397 / JF-1).